The following is a 274-amino-acid chain: NH(3)-dependent NAD(+) synthetase (274 aa).

Position 46–53 (46–53 (GISGGQDS)) interacts with ATP. D52 contacts Mg(2+). A deamido-NAD(+)-binding site is contributed by R140. T160 serves as a coordination point for ATP. Mg(2+) is bound at residue E165. The deamido-NAD(+) site is built by K173 and D180. Residues K189 and T211 each coordinate ATP. 260 to 261 (HK) provides a ligand contact to deamido-NAD(+).

Belongs to the NAD synthetase family. As to quaternary structure, homodimer.

The enzyme catalyses deamido-NAD(+) + NH4(+) + ATP = AMP + diphosphate + NAD(+) + H(+). It participates in cofactor biosynthesis; NAD(+) biosynthesis; NAD(+) from deamido-NAD(+) (ammonia route): step 1/1. Catalyzes the ATP-dependent amidation of deamido-NAD to form NAD. Uses ammonia as a nitrogen source. This Streptococcus equi subsp. equi (strain 4047) protein is NH(3)-dependent NAD(+) synthetase.